The following is a 347-amino-acid chain: Cyclic AMP-dependent transcription factor ATF-4 (347 aa).

The disordered stretch occupies residues 202–296 (TPQCVKEEDT…AATRYRQKKR (95 aa)). T211 carries the post-translational modification Phosphothreonine. A phosphoserine mark is found at S213, S217, S222, S229, and S233. The short motif at 213-222 (SDSDSGICMS) is the BetaTrCP degron motif element. The segment covering 228 to 238 (GSPQHSPSTSR) has biased composition (polar residues). P234 bears the 4-hydroxyproline mark. S243 and S246 each carry phosphoserine. Glycyl lysine isopeptide (Lys-Gly) (interchain with G-Cter in SUMO2) cross-links involve residues K256 and K268. Residues 269-283 (VKTEKLDKKLKKMEQ) are compositionally biased toward basic and acidic residues. The bZIP domain occupies 274 to 337 (LDKKLKKMEQ…QYLKDLIEEV (64 aa)). Residues 276–296 (KKLKKMEQNKTAATRYRQKKR) are basic motif. Positions 301–337 (ALTGECKELEKKNEALKEKADSLAKEIQYLKDLIEEV) are interaction with GABBR1. The interval 302–330 (LTGECKELEKKNEALKEKADSLAKEIQYL) is leucine-zipper. At K307 the chain carries N6-acetyllysine.

This sequence belongs to the bZIP family. As to quaternary structure, binds DNA as a homodimer and as a heterodimer. Heterodimer; heterodimerizes with CEBPB. Heterodimer; heterodimerizes with DDIT3/CHOP. Interacts with CEP290 (via an N-terminal region). Interacts with NEK6, DAPK2 (isoform 2) and ZIPK/DAPK3. Interacts (via its leucine zipper domain) with GABBR1 and GABBR2 (via their C-termini). Forms a heterodimer with TXLNG in osteoblasts. Interacts (via its DNA binding domain) with FOXO1 (C-terminal half); the interaction occurs in osteoblasts and regulates glucose homeostasis through suppression of beta-cell proliferation and a decrease in insulin production. Interacts with SATB2; the interaction results in enhanced DNA binding and transactivation by these transcription factors. Interacts with ABRAXAS2. Interacts with TRIB3, inhibiting the transactivation activity of ATF4. Interacts with DISC1; which inhibits ATF4 transcription factor activity by disrupting ATF4 dimerization and DNA-binding. Interacts with EP300/p300; EP300/p300 stabilizes ATF4 and increases its transcriptional activity independently of its catalytic activity by preventing its ubiquitination. Post-translationally, ubiquitinated by SCF(BTRC) in response to mTORC1 signal, followed by proteasomal degradation and leading to down-regulate expression of SIRT4. Interaction with EP300/p300 inhibits ubiquitination by SCF(BTRC). Phosphorylation at Ser-243 by RPS6KA3/RSK2 in osteoblasts enhances transactivation activity and promotes osteoblast differentiation. Phosphorylated on the betaTrCP degron motif at Ser-217, followed by phosphorylation at Thr-211, Ser-222, Ser-229, Ser-233 and Ser-246, promoting interaction with BTRC and ubiquitination. Phosphorylation is promoted by mTORC1. Phosphorylation at Ser-213 by CK2 decreases its stability. Phosphorylated by NEK6. In terms of processing, hydroxylated by PHD3, leading to decreased protein stability. Expressed in brain, heart, liver, spleen, lung and muscle, but not testis.

Its subcellular location is the nucleus. The protein localises to the nucleus speckle. It localises to the cytoplasm. The protein resides in the cell membrane. It is found in the cytoskeleton. Its subcellular location is the microtubule organizing center. The protein localises to the centrosome. In terms of biological role, transcription factor that binds the cAMP response element (CRE) (consensus: 5'-GTGACGT[AC][AG]-3') and displays two biological functions, as regulator of metabolic and redox processes under normal cellular conditions, and as master transcription factor during integrated stress response (ISR). Binds to asymmetric CRE's as a heterodimer and to palindromic CRE's as a homodimer. Core effector of the ISR, which is required for adaptation to various stress such as endoplasmic reticulum (ER) stress, amino acid starvation, mitochondrial stress or oxidative stress. During ISR, ATF4 translation is induced via an alternative ribosome translation re-initiation mechanism in response to EIF2S1/eIF-2-alpha phosphorylation, and stress-induced ATF4 acts as a master transcription factor of stress-responsive genes in order to promote cell recovery. Promotes the transcription of genes linked to amino acid sufficiency and resistance to oxidative stress to protect cells against metabolic consequences of ER oxidation. Activates the transcription of NLRP1, possibly in concert with other factors in response to ER stress. Activates the transcription of asparagine synthetase (ASNS) in response to amino acid deprivation or ER stress. However, when associated with DDIT3/CHOP, the transcriptional activation of the ASNS gene is inhibited in response to amino acid deprivation. Together with DDIT3/CHOP, mediates programmed cell death by promoting the expression of genes involved in cellular amino acid metabolic processes, mRNA translation and the terminal unfolded protein response (terminal UPR), a cellular response that elicits programmed cell death when ER stress is prolonged and unresolved. Activates the expression of COX7A2L/SCAF1 downstream of the EIF2AK3/PERK-mediated unfolded protein response, thereby promoting formation of respiratory chain supercomplexes and increasing mitochondrial oxidative phosphorylation. Together with DDIT3/CHOP, activates the transcription of the IRS-regulator TRIB3 and promotes ER stress-induced neuronal cell death by regulating the expression of BBC3/PUMA in response to ER stress. May cooperate with the UPR transcriptional regulator QRICH1 to regulate ER protein homeostasis which is critical for cell viability in response to ER stress. In the absence of stress, ATF4 translation is at low levels and it is required for normal metabolic processes such as embryonic lens formation, fetal liver hematopoiesis, bone development and synaptic plasticity. Acts as a regulator of osteoblast differentiation in response to phosphorylation by RPS6KA3/RSK2: phosphorylation in osteoblasts enhances transactivation activity and promotes expression of osteoblast-specific genes and post-transcriptionally regulates the synthesis of Type I collagen, the main constituent of the bone matrix. Cooperates with FOXO1 in osteoblasts to regulate glucose homeostasis through suppression of beta-cell production and decrease in insulin production. Activates transcription of SIRT4. Regulates the circadian expression of the core clock component PER2 and the serotonin transporter SLC6A4. Binds in a circadian time-dependent manner to the cAMP response elements (CRE) in the SLC6A4 and PER2 promoters and periodically activates the transcription of these genes. Mainly acts as a transcriptional activator in cellular stress adaptation, but it can also act as a transcriptional repressor: acts as a regulator of synaptic plasticity by repressing transcription, thereby inhibiting induction and maintenance of long-term memory. Regulates synaptic functions via interaction with DISC1 in neurons, which inhibits ATF4 transcription factor activity by disrupting ATF4 dimerization and DNA-binding. This is Cyclic AMP-dependent transcription factor ATF-4 from Rattus norvegicus (Rat).